Consider the following 748-residue polypeptide: Acyl-coenzyme A oxidase (748 aa).

This sequence belongs to the acyl-CoA oxidase family. In terms of assembly, homooctamer. Requires FAD as cofactor.

The protein localises to the peroxisome. The catalysed reaction is a 2,3-saturated acyl-CoA + O2 = a (2E)-enoyl-CoA + H2O2. It functions in the pathway lipid metabolism; peroxisomal fatty acid beta-oxidation. This chain is Acyl-coenzyme A oxidase (POX1), found in Saccharomyces cerevisiae (strain ATCC 204508 / S288c) (Baker's yeast).